Consider the following 320-residue polypeptide: Phosphate acetyltransferase (320 aa).

It belongs to the phosphate acetyltransferase and butyryltransferase family.

The protein resides in the cytoplasm. It catalyses the reaction acetyl-CoA + phosphate = acetyl phosphate + CoA. It participates in metabolic intermediate biosynthesis; acetyl-CoA biosynthesis; acetyl-CoA from acetate: step 2/2. This chain is Phosphate acetyltransferase (pta), found in Mycoplasma pneumoniae (strain ATCC 29342 / M129 / Subtype 1) (Mycoplasmoides pneumoniae).